Here is a 517-residue protein sequence, read N- to C-terminus: GMP synthase [glutamine-hydrolyzing] (517 aa).

One can recognise a Glutamine amidotransferase type-1 domain in the interval 9-199; it reads RILILDFGSQ…VLGVCGCERL (191 aa). The active-site Nucleophile is Cys-86. Residues His-173 and Glu-175 contribute to the active site. The region spanning 200-392 is the GMPS ATP-PPase domain; sequence WTSESIIEDA…LGLPYNMLYR (193 aa). 227–233 provides a ligand contact to ATP; sequence SGGVDSS.

In terms of assembly, homodimer.

It catalyses the reaction XMP + L-glutamine + ATP + H2O = GMP + L-glutamate + AMP + diphosphate + 2 H(+). The protein operates within purine metabolism; GMP biosynthesis; GMP from XMP (L-Gln route): step 1/1. Functionally, catalyzes the synthesis of GMP from XMP. This Vibrio campbellii (strain ATCC BAA-1116) protein is GMP synthase [glutamine-hydrolyzing].